The following is a 248-amino-acid chain: Transcription factor cicD (248 aa).

The span at 1 to 22 (MVGSRHPDQCAKRWHHSLDPNV) shows a compositional bias: basic and acidic residues. Residues 1-25 (MVGSRHPDQCAKRWHHSLDPNVKRG) are disordered. The region spanning 19-74 (DPNVKRGPWTMEEDSSLLEAVQKIGRDWKEIGRELFPSRSTTDIKNRYVILSRRRG) is the HTH myb-type domain. The H-T-H motif DNA-binding region spans 46–70 (WKEIGRELFPSRSTTDIKNRYVILS). The disordered stretch occupies residues 186 to 208 (SELEGSFTSRNHEEPPQPLPVPD).

The protein resides in the nucleus. Functionally, transcription factor that regulates the expression of the gene cluster that mediates the biosynthesis of cichorine, a phytotoxin active against knapweed, corn, and soybeans. The protein is Transcription factor cicD of Emericella nidulans (strain FGSC A4 / ATCC 38163 / CBS 112.46 / NRRL 194 / M139) (Aspergillus nidulans).